A 901-amino-acid chain; its full sequence is Protein translocase subunit SecA (901 aa).

Residues glutamine 85, 103 to 107 (GEGKT), and aspartate 510 each bind ATP. The span at 836–845 (EEAERARQEM) shows a compositional bias: basic and acidic residues. Residues 836 to 901 (EEAERARQEM…HCHGSRVARQ (66 aa)) are disordered. The segment covering 849-866 (INQNNLPVDENSQTTQNS) has biased composition (polar residues). Positions 882, 884, 893, and 894 each coordinate Zn(2+). Over residues 888 to 901 (KKYKHCHGSRVARQ) the composition is skewed to basic residues.

Belongs to the SecA family. As to quaternary structure, monomer and homodimer. Part of the essential Sec protein translocation apparatus which comprises SecA, SecYEG and auxiliary proteins SecDF-YajC and YidC. Zn(2+) serves as cofactor.

The protein resides in the cell inner membrane. It localises to the cytoplasm. It carries out the reaction ATP + H2O + cellular proteinSide 1 = ADP + phosphate + cellular proteinSide 2.. Part of the Sec protein translocase complex. Interacts with the SecYEG preprotein conducting channel. Has a central role in coupling the hydrolysis of ATP to the transfer of proteins into and across the cell membrane, serving both as a receptor for the preprotein-SecB complex and as an ATP-driven molecular motor driving the stepwise translocation of polypeptide chains across the membrane. The polypeptide is Protein translocase subunit SecA (Haemophilus influenzae (strain PittEE)).